A 396-amino-acid polypeptide reads, in one-letter code: Probable circularly permuted 1,3-beta-glucanase YJL171C (396 aa).

An N-terminal signal peptide occupies residues 1-19 (MLQSIVLSVCMFMLHTVAA). N-linked (GlcNAc...) asparagine glycans are attached at residues N51, N99, N122, N146, N174, N219, and N249. The ExDxxE motif motif lies at 259 to 264 (EYDIFE). Residues N267, N300, N328, and N346 are each glycosylated (N-linked (GlcNAc...) asparagine). Residue N368 is the site of GPI-anchor amidated asparagine attachment. The propeptide at 369-396 (GVALTKMQNGVWYYILAIFTAFTQVVLI) is removed in mature form.

It belongs to the PGA52 family. Post-translationally, extensively N-glycosylated.

It is found in the cell membrane. The catalysed reaction is Hydrolysis of (1-&gt;3)-beta-D-glucosidic linkages in (1-&gt;3)-beta-D-glucans.. In terms of biological role, probable circularly permuted 1,3-beta-glucanase involved in cell wall modification through beta-1,3-glucan network alterations such as increased branching or remodeling. The protein is Probable circularly permuted 1,3-beta-glucanase YJL171C (TOH1) of Saccharomyces cerevisiae (strain ATCC 204508 / S288c) (Baker's yeast).